The primary structure comprises 29 residues: Potassium channel toxin alpha-KTx 8.3 (29 aa).

3 cysteine pairs are disulfide-bonded: Cys-3–Cys-19, Cys-6–Cys-24, and Cys-10–Cys-26.

The protein belongs to the short scorpion toxin superfamily. Potassium channel inhibitor family. Alpha-KTx 08 subfamily. Expressed by the venom gland.

The protein localises to the secreted. Functionally, specific and potent inhibitor of ClC-2/CLCN2 chloride channel. It slows ClC-2/CLCN2 activation by increasing the latency to first opening by nearly 8-fold but is unable to inhibit open channels, suggesting that this toxin inhibits channel activation gating. In Leiurus hebraeus (Hebrew deathstalker scorpion), this protein is Potassium channel toxin alpha-KTx 8.3.